Reading from the N-terminus, the 953-residue chain is Ubiquitin carboxyl-terminal hydrolase CYLD (953 aa).

The segment at 106 to 590 is interaction with TRIP; that stretch reads CEERFSLFKN…FEIMIGKKKG (485 aa). CAP-Gly domains lie at 153-198 and 253-286; these read LAER…VFVA and DVLPGKESLGYFVGVDMDNPIGNWDGRFDGVQLC. Disordered regions lie at residues 313–349 and 384–410; these read PPKLAFMSRGVGDKGSFSHNKPKATGSTSDPGTRNRS and SLTEIPPDFGHASPPLQPPSMNSLSSE. Positions 337–346 are enriched in polar residues; sequence TGSTSDPGTR. Phosphoserine occurs at positions 384, 415, and 419. Positions 391–466 are interaction with TRAF2; that stretch reads DFGHASPPLQ…LAVSSGNSHG (76 aa). Residues 467 to 681 are interaction with IKBKG/NEMO; sequence LEVGSLAEVK…FTSEEKDPEE (215 aa). A CAP-Gly 3 domain is found at 489–532; it reads GQPPGLNEVLAGLELEDECAGCTDGTFRGTRYFTCALKKALFVK. A USP domain is found at 589 to 947; the sequence is KGIQGHYNSC…DAYMCMYQSP (359 aa). Cysteine 598 functions as the Nucleophile in the catalytic mechanism. The interval 778–830 is B-box; it reads LEDTPRQCRICGGLAMYECRECYDDPDISAGKIKQFCKTCNAQVHLHPKRLNH. 8 residues coordinate Zn(2+): cysteine 785, cysteine 788, cysteine 796, cysteine 799, cysteine 814, cysteine 817, histidine 822, and histidine 830. Histidine 868 functions as the Proton acceptor in the catalytic mechanism.

Belongs to the peptidase C19 family. Interacts (via CAP-Gly domain) with IKBKG/NEMO (via proline-rich C-terminal region). Interacts with TRAF2 and TRIP. Interacts with PLK1, DVL1, DVL3, MAVS, TBK1, IKKE and RIGI. Interacts (via CAP-Gly domain) with microtubules. Interacts with HDAC6 and BCL3. Interacts with MAP3K7. Identified in a complex with TRAF6 and SQSTM1. Interacts with OPTN and SQSTM1. Interacts with CEP350. Interacts with RNF31; the interaction is indirect and is mediated via SPATA2. Interacts with SPATA2 (via the PUB domain); the interaction is direct and recruits CYLD to the LUBAC complex, thereby regulating TNF-alpha-induced necroptosis. Post-translationally, phosphorylated on several serine residues by IKKA and/or IKKB in response to immune stimuli. Phosphorylation requires IKBKG. Phosphorylation abolishes TRAF2 deubiquitination, interferes with the activation of Jun kinases, and strongly reduces CD40-dependent gene activation by NF-kappa-B. Ubiquitinated. Polyubiquitinated in hepatocytes treated with palmitic acid. Ubiquitination is mediated by E3 ligase TRIM47 and leads to proteasomal degradation.

The protein resides in the cytoplasm. The protein localises to the perinuclear region. It localises to the cytoskeleton. Its subcellular location is the cell membrane. It is found in the microtubule organizing center. The protein resides in the centrosome. The protein localises to the spindle. It localises to the cilium basal body. It carries out the reaction Thiol-dependent hydrolysis of ester, thioester, amide, peptide and isopeptide bonds formed by the C-terminal Gly of ubiquitin (a 76-residue protein attached to proteins as an intracellular targeting signal).. In terms of biological role, deubiquitinase that specifically cleaves 'Lys-63'- and linear 'Met-1'-linked polyubiquitin chains and is involved in NF-kappa-B activation and TNF-alpha-induced necroptosis. Negatively regulates NF-kappa-B activation by deubiquitinating upstream signaling factors. Contributes to the regulation of cell survival, proliferation and differentiation via its effects on NF-kappa-B activation. Negative regulator of Wnt signaling. Inhibits HDAC6 and thereby promotes acetylation of alpha-tubulin and stabilization of microtubules. Plays a role in the regulation of microtubule dynamics, and thereby contributes to the regulation of cell proliferation, cell polarization, cell migration, and angiogenesis. Required for normal cell cycle progress and normal cytokinesis. Inhibits nuclear translocation of NF-kappa-B. Plays a role in the regulation of inflammation and the innate immune response, via its effects on NF-kappa-B activation. Dispensable for the maturation of intrathymic natural killer cells, but required for the continued survival of immature natural killer cells. Negatively regulates TNFRSF11A signaling and osteoclastogenesis. Involved in the regulation of ciliogenesis, allowing ciliary basal bodies to migrate and dock to the plasma membrane; this process does not depend on NF-kappa-B activation. Ability to remove linear ('Met-1'-linked) polyubiquitin chains regulates innate immunity and TNF-alpha-induced necroptosis: recruited to the LUBAC complex via interaction with SPATA2 and restricts linear polyubiquitin formation on target proteins. Regulates innate immunity by restricting linear polyubiquitin formation on RIPK2 in response to NOD2 stimulation. Involved in TNF-alpha-induced necroptosis by removing linear ('Met-1'-linked) polyubiquitin chains from RIPK1, thereby regulating the kinase activity of RIPK1. Negatively regulates intestinal inflammation by removing 'Lys-63' linked polyubiquitin chain of NLRP6, thereby reducing the interaction between NLRP6 and PYCARD/ASC and formation of the NLRP6 inflammasome. Does not catalyze deubiquitination of heterotypic 'Lys-63'-/'Lys-48'-linked branched ubiquitin chains. Removes 'Lys-63' linked polyubiquitin chain of MAP3K7, which inhibits phosphorylation and blocks downstream activation of the JNK-p38 kinase cascades. Also removes 'Lys-63'-linked polyubiquitin chains of MAP3K1 and MA3P3K3, which inhibit their interaction with MAP2K1 and MAP2K2. The protein is Ubiquitin carboxyl-terminal hydrolase CYLD (CYLD) of Bos taurus (Bovine).